Reading from the N-terminus, the 312-residue chain is Light-independent protochlorophyllide reductase iron-sulfur ATP-binding protein (312 aa).

Residues 55 to 60 (GIGKST) and lysine 84 each bind ATP. Position 59 (serine 59) interacts with Mg(2+). [4Fe-4S] cluster contacts are provided by cysteine 140 and cysteine 174. ATP contacts are provided by residues 225-226 (NR) and 249-251 (PDL).

Belongs to the NifH/BchL/ChlL family. As to quaternary structure, homodimer. Protochlorophyllide reductase is composed of three subunits; BchL, BchN and BchB. [4Fe-4S] cluster serves as cofactor.

The catalysed reaction is chlorophyllide a + oxidized 2[4Fe-4S]-[ferredoxin] + 2 ADP + 2 phosphate = protochlorophyllide a + reduced 2[4Fe-4S]-[ferredoxin] + 2 ATP + 2 H2O. It functions in the pathway porphyrin-containing compound metabolism; bacteriochlorophyll biosynthesis (light-independent). Component of the dark-operative protochlorophyllide reductase (DPOR) that uses Mg-ATP and reduced ferredoxin to reduce ring D of protochlorophyllide (Pchlide) to form chlorophyllide a (Chlide). This reaction is light-independent. The L component serves as a unique electron donor to the NB-component of the complex, and binds Mg-ATP. The protein is Light-independent protochlorophyllide reductase iron-sulfur ATP-binding protein of Rhodopseudomonas palustris (strain ATCC BAA-98 / CGA009).